Reading from the N-terminus, the 154-residue chain is MKTFKGIASAKDMRVAIVGSCFNGPIADALVSGAAQTFLELGGAEDRLTIVRVPGAFEIPCTLKKLLTSGIEYHAIVACGVLIKGETTHYDHIADQVSARISELSVEYNLPITFSIITAPCVDSAWQRAGIKGSHLGVSGMRTALEMADLFKKL.

5-amino-6-(D-ribitylamino)uracil contacts are provided by residues Phe-22, 56-58, and 81-83; these read AFE and VLI. A (2S)-2-hydroxy-3-oxobutyl phosphate-binding site is contributed by 86–87; that stretch reads ET. Residue His-89 is the Proton donor of the active site. Phe-114 lines the 5-amino-6-(D-ribitylamino)uracil pocket. (2S)-2-hydroxy-3-oxobutyl phosphate is bound at residue Arg-128.

It belongs to the DMRL synthase family.

The catalysed reaction is (2S)-2-hydroxy-3-oxobutyl phosphate + 5-amino-6-(D-ribitylamino)uracil = 6,7-dimethyl-8-(1-D-ribityl)lumazine + phosphate + 2 H2O + H(+). Its pathway is cofactor biosynthesis; riboflavin biosynthesis; riboflavin from 2-hydroxy-3-oxobutyl phosphate and 5-amino-6-(D-ribitylamino)uracil: step 1/2. In terms of biological role, catalyzes the formation of 6,7-dimethyl-8-ribityllumazine by condensation of 5-amino-6-(D-ribitylamino)uracil with 3,4-dihydroxy-2-butanone 4-phosphate. This is the penultimate step in the biosynthesis of riboflavin. The protein is 6,7-dimethyl-8-ribityllumazine synthase of Chlamydia abortus (strain DSM 27085 / S26/3) (Chlamydophila abortus).